Here is a 505-residue protein sequence, read N- to C-terminus: MTEQKYVVALDQGTTSSRAVVLDHDANIVSVSQREFTQIYPQAGWVEHDPMEIYATQSSTLVEALGKAGIRSDEVAAIGITNQRETTVVWNKETGKPVYNAIVWQCRRTAAICEELKARGLESYIRDNTGLVLDPYFSGTKIKWILDNVEGAREQAEAGQLLFGTVDTWLVWKMTQGRVHVTDYTNASRTMLFNINTLQWDEKILAEFNIPLSMMPEVKKSSEVYGQTNIGGKGGTRIPIAGIAGDQQAALYGQMCVQAGQAKNTYGTGCFLLMNTGQEKVTSNNGLLTTLACGPRGEPAYALEGAVFMGGASIQWLRDELKLISDARDSEYFATKVDTSNGVYVVPAFTGLGAPYWDAYARGTIVGLTRGVNSNHIIRATLESIAYQTRDVLDAMQADSGIKLSALRVDGGAVANNFLMQFQADVLDTEVHRPKVTEVTALGAAYLAGLAVGFWDGLEELQGKAEIDRSFKPHHDEEKRQRRYKGWKRAVKCAQAWAVLHNEEE.

Thr14 provides a ligand contact to ADP. ATP contacts are provided by Thr14, Thr15, and Ser16. Thr14 lines the sn-glycerol 3-phosphate pocket. Residue Arg18 participates in ADP binding. Residues Arg84, Glu85, Tyr136, and Asp246 each contribute to the sn-glycerol 3-phosphate site. Glycerol is bound by residues Arg84, Glu85, Tyr136, Asp246, and Gln247. Residues Thr268 and Gly311 each coordinate ADP. Positions 268, 311, 315, and 412 each coordinate ATP. Positions 412 and 416 each coordinate ADP.

The protein belongs to the FGGY kinase family.

It carries out the reaction glycerol + ATP = sn-glycerol 3-phosphate + ADP + H(+). It functions in the pathway polyol metabolism; glycerol degradation via glycerol kinase pathway; sn-glycerol 3-phosphate from glycerol: step 1/1. Its activity is regulated as follows. Inhibited by fructose 1,6-bisphosphate (FBP). Functionally, key enzyme in the regulation of glycerol uptake and metabolism. Catalyzes the phosphorylation of glycerol to yield sn-glycerol 3-phosphate. This chain is Glycerol kinase, found in Vibrio cholerae serotype O1 (strain M66-2).